Consider the following 364-residue polypeptide: Aminomethyltransferase (364 aa).

Belongs to the GcvT family. As to quaternary structure, the glycine cleavage system is composed of four proteins: P, T, L and H.

It catalyses the reaction N(6)-[(R)-S(8)-aminomethyldihydrolipoyl]-L-lysyl-[protein] + (6S)-5,6,7,8-tetrahydrofolate = N(6)-[(R)-dihydrolipoyl]-L-lysyl-[protein] + (6R)-5,10-methylene-5,6,7,8-tetrahydrofolate + NH4(+). The glycine cleavage system catalyzes the degradation of glycine. This Escherichia coli O157:H7 protein is Aminomethyltransferase.